The chain runs to 217 residues: Thymidylate kinase (217 aa).

16 to 23 (GIDGAGKT) serves as a coordination point for ATP.

The protein belongs to the thymidylate kinase family.

It carries out the reaction dTMP + ATP = dTDP + ADP. Its function is as follows. Phosphorylation of dTMP to form dTDP in both de novo and salvage pathways of dTTP synthesis. The chain is Thymidylate kinase from Xylella fastidiosa (strain M23).